The following is a 1420-amino-acid chain: Apolipoprotein(a) (1420 aa).

The span at 19 to 30 (TAVAPPNVTPVP) shows a compositional bias: low complexity. A disordered region spans residues 19–46 (TAVAPPNVTPVPSLEAPSEQAPTEQRPG). 5 consecutive Kringle domains span residues 49–127 (ECYH…LTQC), 163–241 (ECYH…LTQC), 277–355 (ECYH…LTQC), 391–469 (ECYH…LTRC), and 505–583 (ECYY…LTQC). Disulfide bonds link Cys-50–Cys-127, Cys-71–Cys-110, Cys-99–Cys-122, Cys-164–Cys-241, Cys-185–Cys-224, Cys-213–Cys-236, Cys-278–Cys-355, Cys-299–Cys-338, Cys-327–Cys-350, Cys-392–Cys-469, Cys-413–Cys-452, Cys-441–Cys-464, Cys-506–Cys-583, Cys-527–Cys-566, and Cys-555–Cys-578. Residues 598 to 617 (PDPSTQASSEEAPTEQSPEV) are disordered. Residues 600 to 616 (PSTQASSEEAPTEQSPE) show a composition bias toward polar residues. Kringle domains follow at residues 619-697 (DCYH…LTQC), 725-803 (DCYH…LTQC), 839-917 (DCYQ…LTQC), 953-1031 (DCYH…LTQC), and 1067-1145 (QCYH…LTRC). Cystine bridges form between Cys-620-Cys-697, Cys-641-Cys-680, Cys-669-Cys-692, Cys-726-Cys-803, Cys-747-Cys-786, Cys-775-Cys-798, Cys-840-Cys-917, Cys-861-Cys-900, Cys-889-Cys-912, Cys-954-Cys-1031, Cys-975-Cys-1014, Cys-1003-Cys-1026, Cys-1068-Cys-1145, Cys-1089-Cys-1128, Cys-1117-Cys-1140, Cys-1217-Cys-1233, Cys-1309-Cys-1376, Cys-1339-Cys-1355, and Cys-1366-Cys-1394. The 228-residue stretch at 1191-1418 (IVGGCVAHPH…FVTWIEGVMR (228 aa)) folds into the Peptidase S1 domain.

Belongs to the peptidase S1 family. Plasminogen subfamily. In terms of assembly, disulfide-linked to apo-B100. Binds to fibronectin and decorin. In terms of processing, N- and O-glycosylated.

Its function is as follows. Apo(a) is the main constituent of lipoprotein(a) (Lp(a)). It has serine proteinase activity and is able of autoproteolysis. Inhibits tissue-type plasminogen activator 1. Lp(a) may be a ligand for megalin/Gp 330. In Macaca mulatta (Rhesus macaque), this protein is Apolipoprotein(a) (LPA).